A 123-amino-acid polypeptide reads, in one-letter code: Holo-[acyl-carrier-protein] synthase (123 aa).

Mg(2+) is bound by residues aspartate 8 and glutamate 56.

This sequence belongs to the P-Pant transferase superfamily. AcpS family. The cofactor is Mg(2+).

It localises to the cytoplasm. It catalyses the reaction apo-[ACP] + CoA = holo-[ACP] + adenosine 3',5'-bisphosphate + H(+). Transfers the 4'-phosphopantetheine moiety from coenzyme A to a Ser of acyl-carrier-protein. In Clostridium beijerinckii (strain ATCC 51743 / NCIMB 8052) (Clostridium acetobutylicum), this protein is Holo-[acyl-carrier-protein] synthase.